Here is a 483-residue protein sequence, read N- to C-terminus: Glutamyl-tRNA(Gln) amidotransferase subunit A (483 aa).

Residues Lys-76 and Ser-151 each act as charge relay system in the active site. Ser-175 serves as the catalytic Acyl-ester intermediate.

The protein belongs to the amidase family. GatA subfamily. Heterotrimer of A, B and C subunits.

It catalyses the reaction L-glutamyl-tRNA(Gln) + L-glutamine + ATP + H2O = L-glutaminyl-tRNA(Gln) + L-glutamate + ADP + phosphate + H(+). Its function is as follows. Allows the formation of correctly charged Gln-tRNA(Gln) through the transamidation of misacylated Glu-tRNA(Gln) in organisms which lack glutaminyl-tRNA synthetase. The reaction takes place in the presence of glutamine and ATP through an activated gamma-phospho-Glu-tRNA(Gln). The chain is Glutamyl-tRNA(Gln) amidotransferase subunit A from Pseudomonas fluorescens (strain SBW25).